The primary structure comprises 281 residues: Pantothenate synthetase (281 aa).

Residue 30–37 (MGNLHQGH) participates in ATP binding. Histidine 37 serves as the catalytic Proton donor. Position 61 (glutamine 61) interacts with (R)-pantoate. Glutamine 61 serves as a coordination point for beta-alanine. 149 to 152 (GNKD) contributes to the ATP binding site. Glutamine 155 contacts (R)-pantoate. ATP contacts are provided by residues isoleucine 178 and 186-189 (MSSR).

The protein belongs to the pantothenate synthetase family. Homodimer.

It localises to the cytoplasm. It carries out the reaction (R)-pantoate + beta-alanine + ATP = (R)-pantothenate + AMP + diphosphate + H(+). It participates in cofactor biosynthesis; (R)-pantothenate biosynthesis; (R)-pantothenate from (R)-pantoate and beta-alanine: step 1/1. Its function is as follows. Catalyzes the condensation of pantoate with beta-alanine in an ATP-dependent reaction via a pantoyl-adenylate intermediate. The chain is Pantothenate synthetase from Shewanella baltica (strain OS185).